Reading from the N-terminus, the 198-residue chain is Sorcin (198 aa).

4 consecutive EF-hand domains span residues 29–64, 70–103, 100–135, and 134–169; these read GQTQ…SGIA, FNLE…AVLN, AVLN…MGFR, and FRLS…LRAL. Residues Asp-83, Asp-85, Ser-87, Thr-89, Glu-94, Asp-113, Asp-115, Ser-117, Thr-119, and Glu-124 each contribute to the Ca(2+) site.

Homodimer. Interacts with GCA, RYR2 and ANXA7. Detected in cardiac myocytes.

Its subcellular location is the cytoplasm. The protein localises to the sarcoplasmic reticulum membrane. Calcium-binding protein that modulates excitation-contraction coupling in the heart. Contributes to calcium homeostasis in the heart sarcoplasmic reticulum. Modulates the activity of RYR2 calcium channels. The chain is Sorcin (SRI) from Homo sapiens (Human).